The chain runs to 503 residues: MGFDPENQSISSVGQVVGDSSSGGITAEKEPLLKENHSPENYSVLAAIPPFLFPALGALLFGYEIGATSCAIMSLKSPTLSGISWYDLSSVDVGIITSGSLYGALIGSIVAFSVADIIGRRKELILAAFLYLVGAIVTVVAPVFSILIIGRVTYGMGIGLTMHAAPMYIAETAPSQIRGRMISLKEFSTVLGMVGGYGIGSLWITVISGWRYMYATILPFPVIMGTGMCWLPASPRWLLLRALQGQGNGENLQQAAIRSLCRLRGSVIADSAAEQVNEILAELSLVGEDKEATFGELFRGKCLKALTIAGGLVLFQQITGQPSVLYYAPSILQTAGFSAAADATRISILLGLLKLVMTGVSVIVIDRVGRRPLLLCGVSGMVISLFLLGSYYMFYKNVPAVAVAALLLYVGCYQLSFGPIGWLMISEIFPLKLRGRGISLAVLVNFGANALVTFAFSPLKELLGAGILFCAFGVICVVSLFFIYYIVPETKGLTLEEIEAKCL.

Residues 1–23 (MGFDPENQSISSVGQVVGDSSSG) are disordered. A compositionally biased stretch (low complexity) spans 8 to 23 (QSISSVGQVVGDSSSG). The next 12 helical transmembrane spans lie at 51–73 (FLFP…CAIM), 95–115 (IITS…FSVA), 129–149 (FLYL…ILII), 152–172 (VTYG…IAET), 190–210 (VLGM…ISGW), 213–233 (MYAT…WLPA), 305–325 (ALTI…PSVL), 346–366 (ISIL…IVID), 374–394 (LLCG…YYMF), 405–425 (ALLL…WLMI), 437–457 (GISL…FAFS), and 467–487 (ILFC…YYIV).

The protein belongs to the major facilitator superfamily. Sugar transporter (TC 2.A.1.1) family.

It is found in the membrane. This is D-xylose-proton symporter-like 1 from Arabidopsis thaliana (Mouse-ear cress).